We begin with the raw amino-acid sequence, 463 residues long: Fumarate hydratase class II (463 aa).

Residues Ser95 to Thr97, His126 to Asp129, Ser136 to Asn138, and Thr184 contribute to the substrate site. The active-site Proton donor/acceptor is His185. The active site involves Ser315. Substrate contacts are provided by residues Ser316 and Lys321 to Asn323.

It belongs to the class-II fumarase/aspartase family. Fumarase subfamily. Homotetramer.

The protein resides in the cytoplasm. It carries out the reaction (S)-malate = fumarate + H2O. Its pathway is carbohydrate metabolism; tricarboxylic acid cycle; (S)-malate from fumarate: step 1/1. Its function is as follows. Involved in the TCA cycle. Catalyzes the stereospecific interconversion of fumarate to L-malate. The sequence is that of Fumarate hydratase class II from Chlamydia trachomatis serovar D (strain ATCC VR-885 / DSM 19411 / UW-3/Cx).